Consider the following 197-residue polypeptide: Peptidoglycan-recognition protein 1 (197 aa).

A signal peptide spans 1–23; it reads MKLATITFFLLTEIFFYISYAEA. 2 cysteine pairs are disulfide-bonded: C31/C154 and C68/C74. The 128-residue stretch at 53-180 folds into the N-acetylmuramoyl-L-alanine amidase domain; the sequence is KPLERVVIHH…RNVKATKSPG (128 aa).

This sequence belongs to the N-acetylmuramoyl-L-alanine amidase 2 family. Localizes to plasma (at protein level).

It localises to the secreted. Functionally, peptidoglycan-recognition protein probably involved in innate immunity by binding to peptidoglycans (PGN) of bacteria and activating the prophenoloxidase (proPO) cascade immune response. Binds to 1,3-beta-D-glucan and PGN. The chain is Peptidoglycan-recognition protein 1 (PGRP-1) from Holotrichia diomphalia (Korean black chafer).